A 734-amino-acid chain; its full sequence is PI-PLC X-box domain-containing protein DDB_G0293730 (734 aa).

The stretch at 8 to 70 (IKNILLKIEK…ELNEKLIVEK (63 aa)) forms a coiled coil. A PI-PLC X-box domain is found at 440-604 (KLKDRKVRNL…CIYDDLVNPL (165 aa)).

This is PI-PLC X-box domain-containing protein DDB_G0293730 from Dictyostelium discoideum (Social amoeba).